The primary structure comprises 326 residues: CRISPR-associated endonuclease Cas1 (326 aa).

Residues Glu191, His255, and Asp269 each coordinate Mn(2+).

It belongs to the CRISPR-associated endonuclease Cas1 family. As to quaternary structure, homodimer. Interacts with Cas3, in the absence of crRNA. Mg(2+) serves as cofactor. It depends on Mn(2+) as a cofactor.

Functionally, CRISPR (clustered regularly interspaced short palindromic repeat), is an adaptive immune system that provides protection against mobile genetic elements (viruses, transposable elements and conjugative plasmids). CRISPR clusters contain sequences complementary to antecedent mobile elements and target invading nucleic acids. CRISPR clusters are transcribed and processed into CRISPR RNA (crRNA). Acts as a dsDNA endonuclease. Involved in the integration of spacer DNA into the CRISPR cassette. This chain is CRISPR-associated endonuclease Cas1, found in Pectobacterium atrosepticum (strain SCRI 1043 / ATCC BAA-672) (Erwinia carotovora subsp. atroseptica).